The primary structure comprises 2381 residues: Nipped-B-like protein A (2381 aa).

The HEAT 1 repeat unit spans residues serine 85–isoleucine 124. 3 disordered regions span residues proline 131–glutamine 211, histidine 240–glycine 289, and leucine 329–proline 503. Positions glycine 138–proline 158 are enriched in polar residues. 2 stretches are compositionally biased toward basic and acidic residues: residues glycine 254 to glutamate 273 and glutamate 333 to lysine 355. Over residues glycine 373–asparagine 389 the composition is skewed to gly residues. A compositionally biased stretch (basic and acidic residues) spans valine 451–arginine 473. Residues lysine 552–serine 565 carry the PxVxL motif motif. A compositionally biased stretch (basic and acidic residues) spans glutamine 570–alanine 580. Disordered stretches follow at residues glutamine 570 to lysine 604 and arginine 629 to alanine 708. Polar residues predominate over residues serine 581–arginine 592. 2 stretches are compositionally biased toward basic and acidic residues: residues threonine 633–glutamate 642 and lysine 658–aspartate 694. HEAT repeat units follow at residues serine 1299–serine 1337, proline 1375–asparagine 1413, tyrosine 1477–lysine 1516, and leucine 1843–glycine 1881. 2 disordered regions span residues isoleucine 2005–aspartate 2095 and leucine 2228–alanine 2271. The span at proline 2006–glutamine 2021 shows a compositional bias: basic residues. Residues glutamate 2040 to aspartate 2056 are compositionally biased toward basic and acidic residues. A compositionally biased stretch (acidic residues) spans glutamate 2057–glutamate 2068. A compositionally biased stretch (basic and acidic residues) spans lysine 2077–glutamate 2086.

It belongs to the SCC2/Nipped-B family.

It is found in the nucleus. Its function is as follows. May play a structural role in chromatin. Involved in sister chromatid cohesion, possibly by facilitating the cohesin complex loading. Transcription factor, which may promote cortical neuron migration during brain development by regulating the transcription of crucial genes in this process. This Danio rerio (Zebrafish) protein is Nipped-B-like protein A (nipbla).